Reading from the N-terminus, the 327-residue chain is Beta-1,4-galactosyltransferase 7 (327 aa).

Over 1–30 (MLPSRRKAAQLPWEDGRARLLPGGLRRKCS) the chain is Cytoplasmic. The helical; Signal-anchor for type II membrane protein transmembrane segment at 31-51 (IFHLFIAFLLLVFFSLLWLQL) threads the bilayer. Over 52-327 (SCSGDMAQVT…KTATPWCIFG (276 aa)) the chain is Lumenal. The tract at residues 61–88 (TRGQGQETSGPPRACPPEPPPEHWEEDE) is disordered. UDP-alpha-D-galactose-binding positions include 100–104 (PFRER) and 139–141 (FNR). Residue N154 is glycosylated (N-linked (GlcNAc...) asparagine). UDP-alpha-D-galactose contacts are provided by residues 164-165 (VD), Y194, and W224. D165 is a Mn(2+) binding site. 226–229 (REDD) serves as a coordination point for N-acetyl-D-glucosamine. H257 is a binding site for Mn(2+). UDP-alpha-D-galactose contacts are provided by residues 257–259 (HLH) and R266.

The protein belongs to the glycosyltransferase 7 family. Mn(2+) is required as a cofactor.

It localises to the golgi apparatus. The protein localises to the golgi stack membrane. It catalyses the reaction 3-O-(beta-D-xylosyl)-L-seryl-[protein] + UDP-alpha-D-galactose = 3-O-(beta-D-galactosyl-(1-&gt;4)-beta-D-xylosyl)-L-seryl-[protein] + UDP + H(+). The protein operates within protein modification; protein glycosylation. Required for the biosynthesis of the tetrasaccharide linkage region of proteoglycans, especially for small proteoglycans in skin fibroblasts. The chain is Beta-1,4-galactosyltransferase 7 (B4galt7) from Mus musculus (Mouse).